Consider the following 430-residue polypeptide: MTTIAKILAREILDSRGNPTLEAEVTLDDGSFGRAAVPSGASTGTKEAVELRDGDKTRYLGKGVRHAVDNVNGTIAETLKNFDAADQQGLDRRLIDLDGTENKGRLGANALLGVSLAAAHAVAASRKQPLWQYLSTITEADVALPVPMMNIINGGAHADNNVDFQEFMVLPVGCSSFSEALRAGTEIFHSLKSVLKGHGLSTAVGDEGGFAPDFRSNVEALDTILEAIGKAGYTAGEDILLGLDVASSEFYDNGKYNLVGENKRLTSEQFVDFLADWVAQYPIISIEDGLAEDDWAGWKLLTDRVGKKVQLVGDDLFVTNPKIFKQGIDSGTANAILIKVNQIGTLTETLEAIAMAHAANYASIVSHRSGETEDTTIADIAVATTATQIKTGSLCRSDRVAKYNQLLRIEQALGSGARYAGRDAFVSIKR.

Q165 lines the (2R)-2-phosphoglycerate pocket. E207 (proton donor) is an active-site residue. Positions 244, 287, and 314 each coordinate Mg(2+). Positions 339, 368, 369, and 390 each coordinate (2R)-2-phosphoglycerate. K339 acts as the Proton acceptor in catalysis.

This sequence belongs to the enolase family. As to quaternary structure, component of the RNA degradosome, a multiprotein complex involved in RNA processing and mRNA degradation. Mg(2+) is required as a cofactor.

It is found in the cytoplasm. The protein resides in the secreted. Its subcellular location is the cell surface. The enzyme catalyses (2R)-2-phosphoglycerate = phosphoenolpyruvate + H2O. Its pathway is carbohydrate degradation; glycolysis; pyruvate from D-glyceraldehyde 3-phosphate: step 4/5. In terms of biological role, catalyzes the reversible conversion of 2-phosphoglycerate (2-PG) into phosphoenolpyruvate (PEP). It is essential for the degradation of carbohydrates via glycolysis. In Xanthomonas axonopodis pv. citri (strain 306), this protein is Enolase.